The sequence spans 218 residues: Pyridoxine/pyridoxamine 5'-phosphate oxidase (218 aa).

Residues 14–17 (RREY) and K72 contribute to the substrate site. Residues 67–72 (RIVLLK), 82–83 (YT), R88, K89, and Q111 contribute to the FMN site. Substrate is bound by residues Y129, R133, and S137. FMN is bound by residues 146-147 (QS) and W191. Residue 197–199 (RLH) coordinates substrate. R201 is a binding site for FMN.

Belongs to the pyridoxamine 5'-phosphate oxidase family. As to quaternary structure, homodimer. FMN is required as a cofactor.

It carries out the reaction pyridoxamine 5'-phosphate + O2 + H2O = pyridoxal 5'-phosphate + H2O2 + NH4(+). The enzyme catalyses pyridoxine 5'-phosphate + O2 = pyridoxal 5'-phosphate + H2O2. The protein operates within cofactor metabolism; pyridoxal 5'-phosphate salvage; pyridoxal 5'-phosphate from pyridoxamine 5'-phosphate: step 1/1. Its pathway is cofactor metabolism; pyridoxal 5'-phosphate salvage; pyridoxal 5'-phosphate from pyridoxine 5'-phosphate: step 1/1. Catalyzes the oxidation of either pyridoxine 5'-phosphate (PNP) or pyridoxamine 5'-phosphate (PMP) into pyridoxal 5'-phosphate (PLP). This chain is Pyridoxine/pyridoxamine 5'-phosphate oxidase, found in Escherichia coli O127:H6 (strain E2348/69 / EPEC).